A 375-amino-acid polypeptide reads, in one-letter code: Succinyl-diaminopimelate desuccinylase (375 aa).

Histidine 66 provides a ligand contact to Zn(2+). The active site involves aspartate 68. Position 99 (aspartate 99) interacts with Zn(2+). The Proton acceptor role is filled by glutamate 133. Zn(2+)-binding residues include glutamate 134, glutamate 162, and histidine 348.

The protein belongs to the peptidase M20A family. DapE subfamily. Homodimer. Zn(2+) serves as cofactor. Co(2+) is required as a cofactor.

It carries out the reaction N-succinyl-(2S,6S)-2,6-diaminopimelate + H2O = (2S,6S)-2,6-diaminopimelate + succinate. Its pathway is amino-acid biosynthesis; L-lysine biosynthesis via DAP pathway; LL-2,6-diaminopimelate from (S)-tetrahydrodipicolinate (succinylase route): step 3/3. In terms of biological role, catalyzes the hydrolysis of N-succinyl-L,L-diaminopimelic acid (SDAP), forming succinate and LL-2,6-diaminopimelate (DAP), an intermediate involved in the bacterial biosynthesis of lysine and meso-diaminopimelic acid, an essential component of bacterial cell walls. The chain is Succinyl-diaminopimelate desuccinylase from Escherichia coli O7:K1 (strain IAI39 / ExPEC).